The sequence spans 569 residues: Urease subunit alpha (569 aa).

One can recognise a Urease domain in the interval 131–569 (GGIDTHIHFI…LPLAQRYLLL (439 aa)). Ni(2+) is bound by residues histidine 136, histidine 138, and lysine 219. Lysine 219 carries the post-translational modification N6-carboxylysine. Residue histidine 221 participates in substrate binding. Residues histidine 248 and histidine 274 each coordinate Ni(2+). The active-site Proton donor is histidine 322. Residue aspartate 362 participates in Ni(2+) binding.

The protein belongs to the metallo-dependent hydrolases superfamily. Urease alpha subunit family. In terms of assembly, heterotrimer of UreA (gamma), UreB (beta) and UreC (alpha) subunits. Three heterotrimers associate to form the active enzyme. Requires Ni cation as cofactor. Post-translationally, carboxylation allows a single lysine to coordinate two nickel ions.

Its subcellular location is the cytoplasm. The catalysed reaction is urea + 2 H2O + H(+) = hydrogencarbonate + 2 NH4(+). The protein operates within nitrogen metabolism; urea degradation; CO(2) and NH(3) from urea (urease route): step 1/1. The polypeptide is Urease subunit alpha (Synechococcus sp. (strain WH7805)).